Reading from the N-terminus, the 197-residue chain is Xanthine phosphoribosyltransferase (197 aa).

Xanthine is bound by residues Leu-20 and Asn-27. 128 to 132 contacts 5-phospho-alpha-D-ribose 1-diphosphate; it reads ANGQA. Lys-156 provides a ligand contact to xanthine.

It belongs to the purine/pyrimidine phosphoribosyltransferase family. Xpt subfamily. Homodimer.

It localises to the cytoplasm. The catalysed reaction is XMP + diphosphate = xanthine + 5-phospho-alpha-D-ribose 1-diphosphate. It participates in purine metabolism; XMP biosynthesis via salvage pathway; XMP from xanthine: step 1/1. Its function is as follows. Converts the preformed base xanthine, a product of nucleic acid breakdown, to xanthosine 5'-monophosphate (XMP), so it can be reused for RNA or DNA synthesis. The protein is Xanthine phosphoribosyltransferase of Bacillus anthracis (strain A0248).